We begin with the raw amino-acid sequence, 583 residues long: MAEDLFEKLVEIGKRRGFFWPSYEIYGGVAGFYDWGPLGHLLKRRIIEKWRRYFVLMHQDHVVEIETPVIGPEKVYIASGHVEHFTDPIVRCTSCGRTFRADHLVEEALGINAEGLSVSELDRIIRERGLRCPVCQGELGRVETFNLLFRTQIGPYEGSVGYLRPELAQGIFVAFKRVYEAMRSRIPLGIAQVGRVGRNEISPRQALVRLREFTIMEMEYFIDPEDQWGSCPFFHRMADSKLPILTYEAKRRGEEKPESFKLEEAVNEGVVISPCLGYWMAVGMRFVEDLGVPSDSIMFEEKGPEERAHYSSQTFDQLVKVSRWGWIEVAGHSYRGDYDLSRHMKYSGQDLTAFKPYPKPIVVKKRRVVVDKAAIGRALKSRAKTVLEELGRMGEGELERLAASNRAVVAGVELPPGSLRIVEVEEKVSGRRFVPHVVEPSFGTDRNVYVALEYAYREVEGRVVLAFPRDIAPVQAVVLPLVENDEKLVERARMVYETLVEAGFTVYYDDSGSIGRRYARADEIGVPAAVTIDYQTLEDGTVTLRDRDTWRQVRIGADEVVDKLRRFIYDGARLEDLGTPVKP.

Residues Arg-100 and Glu-166 each contribute to the substrate site. ATP is bound by residues 198 to 200, 208 to 213, 328 to 329, and 443 to 446; these read RNE, VRLREF, EV, and GTDR. 213–217 is a binding site for substrate; it reads FTIME. 439 to 443 provides a ligand contact to substrate; sequence EPSFG.

It belongs to the class-II aminoacyl-tRNA synthetase family.

It is found in the cytoplasm. The catalysed reaction is tRNA(Gly) + glycine + ATP = glycyl-tRNA(Gly) + AMP + diphosphate. Catalyzes the attachment of glycine to tRNA(Gly). This chain is Glycine--tRNA ligase, found in Aeropyrum pernix (strain ATCC 700893 / DSM 11879 / JCM 9820 / NBRC 100138 / K1).